We begin with the raw amino-acid sequence, 269 residues long: Aquaporin-1 (269 aa).

Residues 2-11 (ASEFKKKLFW) lie on the Cytoplasmic side of the membrane. Residues 12 to 29 (RAVVAEFLATTLFVFISI) traverse the membrane as a helical segment. Over 30 to 46 (GSALGFKYPVGNNQTAV) the chain is Extracellular. N42 carries an N-linked (GlcNAc...) asparagine glycan. Residues 47–65 (QDNVKVSLAFGLSIATLAQ) form a helical membrane-spanning segment. The Cytoplasmic segment spans residues 66 to 68 (SVG). An intramembrane segment occupies 69 to 82 (HISGAHLNPAVTLG). The NPA 1 motif lies at 76-78 (NPA). The Cytoplasmic portion of the chain corresponds to 83–90 (LLLSCQIS). A helical membrane pass occupies residues 91–109 (IFRALMYIIAQCVGAIVAT). Topologically, residues 110-133 (AILSGITSSLTGNSLGRNDLADGV) are extracellular. A helical membrane pass occupies residues 134–153 (NSGQGLGIEIIGTLQLVLCV). The Cytoplasmic portion of the chain corresponds to 154–163 (LATTDRRRRD). The helical transmembrane segment at 164-181 (LGGSAPLAIGLSVALGHL) threads the bilayer. Residues 182-186 (LAIDY) are Extracellular-facing. An intramembrane segment occupies 187–199 (TGCGINPARSFGS). The NPA 2 motif lies at 192–194 (NPA). Over 200–206 (AVITHNF) the chain is Extracellular. N-linked (GlcNAc...) asparagine glycosylation is present at N205. A helical membrane pass occupies residues 207–224 (SNHWIFWVGPFIGGALAV). The Cytoplasmic portion of the chain corresponds to 225–269 (LIYDFILAPRSSDLTDRVKVWTSGQVEEYDLDADDINSRVEMKPK). S247 is modified (phosphoserine). Residue Y253 is modified to Phosphotyrosine. A Phosphoserine modification is found at S262.

Belongs to the MIP/aquaporin (TC 1.A.8) family. As to quaternary structure, homotetramer; each monomer provides an independent water pore. Component of the ankyrin-1 complex in the erythrocyte, composed of ANK1, RHCE, RHAG, SLC4A1, EPB42, GYPA, GYPB and AQP1. Interacts with EPHB2; involved in endolymph production in the inner ear. Identified in a complex with STOM. Interacts (via the N-terminal) with ANK1 (via ANK 1-5 repeats). Interacts (via the C-terminal) with EPB42. Detected in erythrocytes (at protein level). Expressed in a number of tissues including erythrocytes, renal tubules, retinal pigment epithelium, heart, lung, skeletal muscle, kidney and pancreas. Weakly expressed in brain, placenta and liver.

The protein resides in the cell membrane. The enzyme catalyses H2O(in) = H2O(out). It carries out the reaction nitric oxide(out) = nitric oxide(in). It catalyses the reaction CO2(out) = CO2(in). The catalysed reaction is glycerol(in) = glycerol(out). The enzyme catalyses H2O2(out) = H2O2(in). It carries out the reaction K(+)(in) = K(+)(out). It catalyses the reaction Na(+)(in) = Na(+)(out). Its activity is regulated as follows. The water channel activity is inhibited by P-choloromercuribenzene sulphonate and diethylpyrocarbonate(DPPC). The glycerol channel activity is inhibited by P-choloromercuribenzene sulphonate, diethylpyrocarbonate(DPPC), phloretin and Cu(2+). Inhibited by mercury. In terms of biological role, forms a water channel that facilitates the transport of water across cell membranes, playing a crucial role in water homeostasis in various tissues. Could also be permeable to small solutes including hydrogen peroxide, glycerol and gases such as amonnia (NH3), nitric oxide (NO) and carbon dioxide (CO2). Recruited to the ankyrin-1 complex, a multiprotein complex of the erythrocyte membrane, it could be part of a CO2 metabolon, linking facilitated diffusion of CO2 across the membrane, anion exchange of Cl(-)/HCO3(-) and interconversion of dissolved CO2 and carbonic acid in the cytosol. In vitro, it shows non-selective gated cation channel activity and may be permeable to cations like K(+) and Na(+) in vivo. In Homo sapiens (Human), this protein is Aquaporin-1.